A 256-amino-acid chain; its full sequence is Isoprenyl transferase (256 aa).

Residue D33 is part of the active site. D33 lines the Mg(2+) pocket. Residues 34–37, W38, R46, H50, and 78–80 contribute to the substrate site; these read GNGR and STE. N81 acts as the Proton acceptor in catalysis. Residues W82, R84, R201, and 207 to 209 contribute to the substrate site; that span reads RIS. E220 is a binding site for Mg(2+).

It belongs to the UPP synthase family. Homodimer. The cofactor is Mg(2+).

Functionally, catalyzes the condensation of isopentenyl diphosphate (IPP) with allylic pyrophosphates generating different type of terpenoids. This Staphylococcus haemolyticus (strain JCSC1435) protein is Isoprenyl transferase.